The sequence spans 134 residues: uncharacterized protein (134 aa).

An N-terminal signal peptide occupies residues 1–23 (MWHLRCSNWRGSGVFGMCFSLSG). A lipid anchor (N-palmitoyl cysteine) is attached at cysteine 24. A lipid anchor (S-diacylglycerol cysteine) is attached at cysteine 24.

The protein resides in the cell membrane. This is an uncharacterized protein from Treponema pallidum (strain Nichols).